The primary structure comprises 274 residues: Diaminopimelate epimerase (274 aa).

Positions 11 and 65 each coordinate substrate. The Proton donor role is filled by cysteine 74. Residues 75–76 (GN), asparagine 158, asparagine 191, and 209–210 (ER) contribute to the substrate site. Cysteine 218 serves as the catalytic Proton acceptor. 219 to 220 (GT) is a binding site for substrate.

This sequence belongs to the diaminopimelate epimerase family. As to quaternary structure, homodimer.

The protein resides in the cytoplasm. It catalyses the reaction (2S,6S)-2,6-diaminopimelate = meso-2,6-diaminopimelate. It functions in the pathway amino-acid biosynthesis; L-lysine biosynthesis via DAP pathway; DL-2,6-diaminopimelate from LL-2,6-diaminopimelate: step 1/1. Its function is as follows. Catalyzes the stereoinversion of LL-2,6-diaminopimelate (L,L-DAP) to meso-diaminopimelate (meso-DAP), a precursor of L-lysine and an essential component of the bacterial peptidoglycan. In Carboxydothermus hydrogenoformans (strain ATCC BAA-161 / DSM 6008 / Z-2901), this protein is Diaminopimelate epimerase.